Here is a 245-residue protein sequence, read N- to C-terminus: Tetrahydromethanopterin S-methyltransferase subunit A 1 (245 aa).

Residues 1-222 (MADKKPAADN…AGNYSGKVQG (222 aa)) lie on the Cytoplasmic side of the membrane. Histidine 84 contributes to the 5-hydroxybenzimidazolylcob(I)amide binding site. A helical transmembrane segment spans residues 223 to 243 (IMIGLIFTLVIGFLLLMAPLL). The Extracellular portion of the chain corresponds to 244–245 (GA).

Belongs to the MtrA family. As to quaternary structure, the complex is composed of 8 subunits; MtrA, MtrB, MtrC, MtrD, MtrE, MtrF, MtrG and MtrH. The cofactor is 5-hydroxybenzimidazolylcob(I)amide.

It is found in the cell membrane. The catalysed reaction is 5-methyl-5,6,7,8-tetrahydromethanopterin + coenzyme M + 2 Na(+)(in) = 5,6,7,8-tetrahydromethanopterin + methyl-coenzyme M + 2 Na(+)(out). It participates in one-carbon metabolism; methanogenesis from CO(2); methyl-coenzyme M from 5,10-methylene-5,6,7,8-tetrahydromethanopterin: step 2/2. Functionally, part of a complex that catalyzes the formation of methyl-coenzyme M and tetrahydromethanopterin from coenzyme M and methyl-tetrahydromethanopterin. This is an energy-conserving, sodium-ion translocating step. This Methanobrevibacter ruminantium (strain ATCC 35063 / DSM 1093 / JCM 13430 / OCM 146 / M1) (Methanobacterium ruminantium) protein is Tetrahydromethanopterin S-methyltransferase subunit A 1.